The following is a 489-amino-acid chain: Actin-related protein 4 (489 aa).

Positions 323-379 (KRTKPSGVNKSDKKVTPTEEKEQEAVSKSTSPAANSADTPNETGKRPLEEEKPPKEN) are disordered. Basic and acidic residues predominate over residues 332–347 (KSDKKVTPTEEKEQEA). Positions 348 to 364 (VSKSTSPAANSADTPNE) are enriched in polar residues. S349 carries the post-translational modification Phosphoserine. Residues 365 to 379 (TGKRPLEEEKPPKEN) show a composition bias toward basic and acidic residues.

It belongs to the actin family. ARP4 subfamily. As to quaternary structure, component of the NuA4 histone acetyltransferase complex composed of at least ACT1, ARP4, EAF3, EAF5, EAF6, EAF7, EPL1, ESA1, SWC4, TRA1, VID21, YAF9 and YNG2. Component of the chromatin-remodeling INO80 complex, at least composed of ARP4, ARP5, ARP8, RVB1, RVB2, TAF14, NHP10, IES1, IES3, IES4, IES6, ACT1, IES2, IES5 and INO80. Component of the SWR1 chromatin remodeling complex composed of at least ACT1, ARP4, RVB1, RVB2, ARP6, YAF9, VPS71, VPS72, SWC3, SWC4, SWC5, SWC7 and SWR1, and perhaps BDF1. Interacts with histones H4 (HHF1 and HHF2), H3 (HHT1 and HHT2) and H2A (HTA1 and HTA2).

Its subcellular location is the nucleus. Its function is as follows. Chromatin interaction component of the NuA4 histone acetyltransferase complex which is involved in transcriptional activation of selected genes principally by acetylation of nucleosomal histone H4 and H2A. The NuA4 complex is also involved in DNA repair. ARP4 recognizes H2AS128ph (gamma-H2A) and is required for NuA4 complex integrity. Component of the SWR1 complex which mediates the ATP-dependent exchange of histone H2A for the H2A variant HZT1 leading to transcriptional regulation of selected genes by chromatin remodeling. Component of the INO80 complex which remodels chromatin by shifting nucleosomes. Its ability to induce transcription of some phosphate-responsive genes is modulated by inositol polyphosphates. The INO80 complex is involved in DNA repair by associating to gamma-H2A as a response to DNA damage. This Saccharomyces cerevisiae (strain ATCC 204508 / S288c) (Baker's yeast) protein is Actin-related protein 4 (ARP4).